The primary structure comprises 209 residues: Uracil phosphoribosyltransferase (209 aa).

5-phospho-alpha-D-ribose 1-diphosphate is bound by residues R79, R104, and 131-139; that span reads DPMLATGGS. Uracil is bound by residues I194 and 199–201; that span reads GDA. Position 200 (D200) interacts with 5-phospho-alpha-D-ribose 1-diphosphate.

This sequence belongs to the UPRTase family. The cofactor is Mg(2+).

It catalyses the reaction UMP + diphosphate = 5-phospho-alpha-D-ribose 1-diphosphate + uracil. The protein operates within pyrimidine metabolism; UMP biosynthesis via salvage pathway; UMP from uracil: step 1/1. Its activity is regulated as follows. Allosterically activated by GTP. Its function is as follows. Catalyzes the conversion of uracil and 5-phospho-alpha-D-ribose 1-diphosphate (PRPP) to UMP and diphosphate. The polypeptide is Uracil phosphoribosyltransferase (Clostridium botulinum (strain Alaska E43 / Type E3)).